Reading from the N-terminus, the 476-residue chain is Proline--tRNA ligase (476 aa).

This sequence belongs to the class-II aminoacyl-tRNA synthetase family. ProS type 3 subfamily. In terms of assembly, homodimer.

Its subcellular location is the cytoplasm. The enzyme catalyses tRNA(Pro) + L-proline + ATP = L-prolyl-tRNA(Pro) + AMP + diphosphate. Its function is as follows. Catalyzes the attachment of proline to tRNA(Pro) in a two-step reaction: proline is first activated by ATP to form Pro-AMP and then transferred to the acceptor end of tRNA(Pro). The protein is Proline--tRNA ligase of Rubrobacter xylanophilus (strain DSM 9941 / JCM 11954 / NBRC 16129 / PRD-1).